Reading from the N-terminus, the 514-residue chain is Multifunctional alkaline phosphatase superfamily protein pRL90232 (514 aa).

Residues D12, C57, D324, and H325 each contribute to the Mn(2+) site. Residue C57 is the Nucleophile of the active site. C57 carries the post-translational modification 3-oxoalanine (Cys).

The protein belongs to the alkaline phosphatase superfamily. In terms of assembly, homotetramer. The cofactor is Mn(2+). In terms of processing, the conversion to 3-oxoalanine (also known as C-formylglycine, FGly), of a serine or cysteine residue in prokaryotes and of a cysteine residue in eukaryotes, is critical for catalytic activity.

Its function is as follows. Hydrolytic enzyme with a broad substrate specificity acting on phosphate diesters and phosphonate monoesters. The polypeptide is Multifunctional alkaline phosphatase superfamily protein pRL90232 (Rhizobium johnstonii (strain DSM 114642 / LMG 32736 / 3841) (Rhizobium leguminosarum bv. viciae)).